A 429-amino-acid chain; its full sequence is Probable exoglucanase GH6D (429 aa).

A signal peptide spans 1–17 (MRAVYAILAGLLATGSA). Residues W75 and S77 each coordinate substrate. Residues D115 and D162 each act as proton donor in the active site. Residues N206 and W209 each coordinate substrate. N-linked (GlcNAc...) asparagine glycosylation is present at N237. The substrate site is built by N240, W300, K328, and E332. Residues 240 to 261 (NYNPYSTNNPPPYTAGSPSADE) form a disordered region. The disordered stretch occupies residues 362-390 (PEIRADGGGGGSPAPGPSSTAVAPSPSAT). Positions 378–390 (PSSTAVAPSPSAT) are enriched in low complexity. The CBM1 domain maps to 394-429 (NCAARWAQCGGQGWTGPTCCAQGTCQASNQWYSQCL).

It belongs to the glycosyl hydrolase 6 (cellulase B) family.

The protein resides in the secreted. In terms of biological role, probable exoglucanase that may play an important function in biomass degradation by catalyzing the hydrolysis of cellulose. This Podospora anserina (strain S / ATCC MYA-4624 / DSM 980 / FGSC 10383) (Pleurage anserina) protein is Probable exoglucanase GH6D.